Consider the following 152-residue polypeptide: Transcriptional regulator MraZ (152 aa).

2 SpoVT-AbrB domains span residues 5-52 (ATMV…TLPA) and 81-124 (ASEC…DEQT).

It belongs to the MraZ family. In terms of assembly, forms oligomers.

The protein resides in the cytoplasm. It is found in the nucleoid. Negatively regulates its own expression and that of the subsequent genes in the proximal part of the division and cell wall (dcw) gene cluster. Acts by binding directly to DNA. May also regulate the expression of genes outside the dcw cluster. This chain is Transcriptional regulator MraZ, found in Yersinia enterocolitica serotype O:8 / biotype 1B (strain NCTC 13174 / 8081).